The sequence spans 235 residues: uncharacterized protein (235 aa).

Residues 82–221 (LAFKKFPPDP…DTGELIRESP (140 aa)) form the N-acetyltransferase domain.

The protein belongs to the acetyltransferase family.

It localises to the golgi apparatus membrane. Its subcellular location is the endoplasmic reticulum membrane. This is an uncharacterized protein from Schizosaccharomyces pombe (strain 972 / ATCC 24843) (Fission yeast).